We begin with the raw amino-acid sequence, 215 residues long: Pyrophosphatase PpaX (215 aa).

Aspartate 9 acts as the Nucleophile in catalysis.

This sequence belongs to the HAD-like hydrolase superfamily. PpaX family. Requires Mg(2+) as cofactor.

It carries out the reaction diphosphate + H2O = 2 phosphate + H(+). In terms of biological role, hydrolyzes pyrophosphate formed during P-Ser-HPr dephosphorylation by HPrK/P. Might play a role in controlling the intracellular pyrophosphate pool. The polypeptide is Pyrophosphatase PpaX (Bacillus mycoides (strain KBAB4) (Bacillus weihenstephanensis)).